The following is a 173-amino-acid chain: Large ribosomal subunit protein uL10 (173 aa).

This sequence belongs to the universal ribosomal protein uL10 family. Part of the ribosomal stalk of the 50S ribosomal subunit. The N-terminus interacts with L11 and the large rRNA to form the base of the stalk. The C-terminus forms an elongated spine to which L12 dimers bind in a sequential fashion forming a multimeric L10(L12)X complex.

Functionally, forms part of the ribosomal stalk, playing a central role in the interaction of the ribosome with GTP-bound translation factors. The protein is Large ribosomal subunit protein uL10 of Oleidesulfovibrio alaskensis (strain ATCC BAA-1058 / DSM 17464 / G20) (Desulfovibrio alaskensis).